Reading from the N-terminus, the 144-residue chain is Oleosin H2 (144 aa).

Ala-2 carries the N-acetylalanine modification. 3 helical membrane passes run 28–48 (VLAVVTLFPLGAVLLCLAGLI), 53–73 (IIGLAVATPLFVIFSPILVPA), and 75–95 (LTIALAVTGFLTSGAFGITAL). A Proline-knot motif is present at residues 61-72 (PLFVIFSPILVP). The interval 124–144 (QETVGQKTREAGQRSQDVIRP) is disordered.

The protein belongs to the oleosin family. In terms of tissue distribution, expressed in seeds (at protein level).

It localises to the lipid droplet. The protein localises to the membrane. Its function is as follows. May have a structural role to stabilize the lipid body during desiccation of the seed by preventing coalescence of the oil. Probably interacts with both lipid and phospholipid moieties of lipid bodies. May also provide recognition signals for specific lipase anchorage in lipolysis during seedling growth. In Sesamum indicum (Oriental sesame), this protein is Oleosin H2.